Reading from the N-terminus, the 812-residue chain is ATP-dependent zinc metalloprotease FtsH (812 aa).

Topologically, residues Met-1–Asn-21 are cytoplasmic. A helical transmembrane segment spans residues Trp-22–Pro-42. Over Glu-43–Trp-241 the chain is Extracellular. Residues Gly-242–Phe-262 form a helical membrane-spanning segment. Topologically, residues Arg-263–Lys-812 are cytoplasmic. Residue Gly-333–Thr-340 coordinates ATP. His-555 contacts Zn(2+). Residue Glu-556 is part of the active site. Zn(2+)-binding residues include His-559 and Asp-631. The tract at residues Lys-739–Lys-812 is disordered. Basic and acidic residues-rich tracts occupy residues Gln-757–Glu-785 and Glu-803–Lys-812.

It in the central section; belongs to the AAA ATPase family. In the C-terminal section; belongs to the peptidase M41 family. As to quaternary structure, homohexamer. Requires Zn(2+) as cofactor.

It localises to the cell membrane. Functionally, acts as a processive, ATP-dependent zinc metallopeptidase for both cytoplasmic and membrane proteins. Plays a role in the quality control of integral membrane proteins. The protein is ATP-dependent zinc metalloprotease FtsH of Akkermansia muciniphila (strain ATCC BAA-835 / DSM 22959 / JCM 33894 / BCRC 81048 / CCUG 64013 / CIP 107961 / Muc).